A 376-amino-acid polypeptide reads, in one-letter code: Sulfate/thiosulfate import ATP-binding protein CysA (376 aa).

The region spanning 3-237 is the ABC transporter domain; that stretch reads IRLDNISKHF…PNSRFVFDFF (235 aa). 35–42 is an ATP binding site; that stretch reads GPSGSGKT.

It belongs to the ABC transporter superfamily. Sulfate/tungstate importer (TC 3.A.1.6) family. In terms of assembly, the complex is composed of two ATP-binding proteins (CysA), two transmembrane proteins (CysT and CysW) and a solute-binding protein (CysP).

It is found in the cell inner membrane. The enzyme catalyses sulfate(out) + ATP + H2O = sulfate(in) + ADP + phosphate + H(+). It catalyses the reaction thiosulfate(out) + ATP + H2O = thiosulfate(in) + ADP + phosphate + H(+). Functionally, part of the ABC transporter complex CysAWTP involved in sulfate/thiosulfate import. Responsible for energy coupling to the transport system. This is Sulfate/thiosulfate import ATP-binding protein CysA from Vibrio cholerae serotype O1 (strain ATCC 39315 / El Tor Inaba N16961).